A 631-amino-acid polypeptide reads, in one-letter code: Biotin--protein ligase (631 aa).

The BPL/LPL catalytic domain occupies 341-553 (ELYAKLINGC…QFDRYHRLLL (213 aa)).

Belongs to the biotin--protein ligase family. Monomer.

The protein localises to the cytoplasm. The catalysed reaction is apo-[methylmalonyl-CoA:pyruvate carboxytransferase] + biotin + ATP = holo-[methylmalonyl-CoA:pyruvate carboxytransferase] + AMP + diphosphate + H(+). The enzyme catalyses apo-[propionyl-CoA:carbon-dioxide ligase (ADP-forming)] + biotin + ATP = holo-[propionyl-CoA:carbon-dioxide ligase (ADP-forming)] + AMP + diphosphate + H(+). It carries out the reaction apo-[3-methylcrotonoyl-CoA:carbon-dioxide ligase (ADP-forming)] + biotin + ATP = holo-[3-methylcrotonoyl-CoA:carbon-dioxide ligase (ADP-forming)] + AMP + diphosphate + H(+). It catalyses the reaction biotin + L-lysyl-[protein] + ATP = N(6)-biotinyl-L-lysyl-[protein] + AMP + diphosphate + H(+). Its function is as follows. Post-translational modification of specific protein by attachment of biotin. Acts on various carboxylases such as acetyl-CoA-carboxylase, pyruvate carboxylase, propionyl CoA carboxylase, and 3-methylcrotonyl CoA carboxylase. This is Biotin--protein ligase (bpl1) from Schizosaccharomyces pombe (strain 972 / ATCC 24843) (Fission yeast).